The following is a 63-amino-acid chain: Large ribosomal subunit protein bL28c (63 aa).

It belongs to the bacterial ribosomal protein bL28 family.

It is found in the plastid. Its subcellular location is the chloroplast. In Porphyra purpurea (Red seaweed), this protein is Large ribosomal subunit protein bL28c (rpl28).